The following is a 166-amino-acid chain: Monothiol glutaredoxin-3 (166 aa).

A Glutaredoxin domain is found at 56-159 (DSTDFEVFLE…STLDEWTHNK (104 aa)). Cysteine 76 contributes to the [2Fe-2S] cluster binding site.

It belongs to the glutaredoxin family. Monothiol subfamily. Homodimer.

It is found in the nucleus. Functionally, monothiol glutaredoxin involved in the biogenesis of iron-sulfur clusters. Binds one iron-sulfur cluster per dimer. The iron-sulfur cluster is bound between subunits, and is complexed by a bound glutathione and a cysteine residue from each subunit. This is Monothiol glutaredoxin-3 (grx3) from Schizosaccharomyces pombe (strain 972 / ATCC 24843) (Fission yeast).